Reading from the N-terminus, the 363-residue chain is Zinc phosphodiesterase ELAC protein 1 (363 aa).

Residues histidine 62, histidine 64, aspartate 66, histidine 67, histidine 182, aspartate 253, and histidine 313 each coordinate Zn(2+). The active-site Proton acceptor is the aspartate 66.

The protein belongs to the RNase Z family. In terms of assembly, homodimer. Zn(2+) is required as a cofactor.

It is found in the cytoplasm. The protein resides in the cytosol. It localises to the nucleus. The catalysed reaction is Endonucleolytic cleavage of RNA, removing extra 3' nucleotides from tRNA precursor, generating 3' termini of tRNAs. A 3'-hydroxy group is left at the tRNA terminus and a 5'-phosphoryl group is left at the trailer molecule.. In terms of biological role, zinc phosphodiesterase, which displays some tRNA 3'-processing endonuclease activity. Specifically involved in tRNA repair: acts downstream of the ribosome-associated quality control (RQC) pathway by removing a 2',3'-cyclic phosphate from tRNAs following cleavage by ANKZF1. tRNAs are then processed by TRNT1. The chain is Zinc phosphodiesterase ELAC protein 1 (ELAC1) from Bos taurus (Bovine).